An 835-amino-acid chain; its full sequence is Protein translocase subunit SecA (835 aa).

ATP contacts are provided by residues glutamine 85, glycine 103–threonine 107, and aspartate 495. The interval lysine 806–asparagine 835 is disordered. The span at lysine 820–asparagine 835 shows a compositional bias: basic residues.

Belongs to the SecA family. In terms of assembly, monomer and homodimer. Part of the essential Sec protein translocation apparatus which comprises SecA, SecYEG and auxiliary proteins SecDF. Other proteins may also be involved.

Its subcellular location is the cell membrane. The protein resides in the cytoplasm. The enzyme catalyses ATP + H2O + cellular proteinSide 1 = ADP + phosphate + cellular proteinSide 2.. In terms of biological role, part of the Sec protein translocase complex. Interacts with the SecYEG preprotein conducting channel. Has a central role in coupling the hydrolysis of ATP to the transfer of proteins into and across the cell membrane, serving as an ATP-driven molecular motor driving the stepwise translocation of polypeptide chains across the membrane. The polypeptide is Protein translocase subunit SecA (Onion yellows phytoplasma (strain OY-M)).